A 367-amino-acid polypeptide reads, in one-letter code: tRNA (guanine(26)-N(2))-dimethyltransferase (367 aa).

Positions 1 to 365 constitute a Trm1 methyltransferase domain; it reads MRVSEGRVTV…ADVVEIREAT (365 aa). 5 residues coordinate S-adenosyl-L-methionine: R34, R64, D79, D105, and A106. C234, C237, C254, and C257 together coordinate Zn(2+).

Belongs to the class I-like SAM-binding methyltransferase superfamily. Trm1 family.

The enzyme catalyses guanosine(26) in tRNA + 2 S-adenosyl-L-methionine = N(2)-dimethylguanosine(26) in tRNA + 2 S-adenosyl-L-homocysteine + 2 H(+). In terms of biological role, dimethylates a single guanine residue at position 26 of a number of tRNAs using S-adenosyl-L-methionine as donor of the methyl groups. This Haloarcula marismortui (strain ATCC 43049 / DSM 3752 / JCM 8966 / VKM B-1809) (Halobacterium marismortui) protein is tRNA (guanine(26)-N(2))-dimethyltransferase.